The chain runs to 401 residues: Argininosuccinate synthase (401 aa).

An ATP-binding site is contributed by 9-17 (AYSGGLDTS). Tyr-88 is a binding site for L-citrulline. Gly-118 provides a ligand contact to ATP. Residues Thr-120, Asn-124, and Asp-125 each contribute to the L-aspartate site. Asn-124 serves as a coordination point for L-citrulline. 5 residues coordinate L-citrulline: Arg-128, Ser-177, Ser-186, Glu-262, and Tyr-274.

Belongs to the argininosuccinate synthase family. Type 1 subfamily. In terms of assembly, homotetramer.

Its subcellular location is the cytoplasm. It carries out the reaction L-citrulline + L-aspartate + ATP = 2-(N(omega)-L-arginino)succinate + AMP + diphosphate + H(+). The protein operates within amino-acid biosynthesis; L-arginine biosynthesis; L-arginine from L-ornithine and carbamoyl phosphate: step 2/3. This chain is Argininosuccinate synthase, found in Chlorobaculum tepidum (strain ATCC 49652 / DSM 12025 / NBRC 103806 / TLS) (Chlorobium tepidum).